The chain runs to 242 residues: Segregation and condensation protein A (242 aa).

This sequence belongs to the ScpA family. As to quaternary structure, component of a cohesin-like complex composed of ScpA, ScpB and the Smc homodimer, in which ScpA and ScpB bind to the head domain of Smc. The presence of the three proteins is required for the association of the complex with DNA.

The protein resides in the cytoplasm. Participates in chromosomal partition during cell division. May act via the formation of a condensin-like complex containing Smc and ScpB that pull DNA away from mid-cell into both cell halves. This Lactococcus lactis subsp. lactis (strain IL1403) (Streptococcus lactis) protein is Segregation and condensation protein A.